A 202-amino-acid chain; its full sequence is 3-isopropylmalate dehydratase small subunit (202 aa).

It belongs to the LeuD family. LeuD type 1 subfamily. In terms of assembly, heterodimer of LeuC and LeuD.

The catalysed reaction is (2R,3S)-3-isopropylmalate = (2S)-2-isopropylmalate. The protein operates within amino-acid biosynthesis; L-leucine biosynthesis; L-leucine from 3-methyl-2-oxobutanoate: step 2/4. Functionally, catalyzes the isomerization between 2-isopropylmalate and 3-isopropylmalate, via the formation of 2-isopropylmaleate. In Rhizobium etli (strain CIAT 652), this protein is 3-isopropylmalate dehydratase small subunit.